Here is a 211-residue protein sequence, read N- to C-terminus: Protein-L-isoaspartate O-methyltransferase (211 aa).

The active site involves Ser62.

The protein belongs to the methyltransferase superfamily. L-isoaspartyl/D-aspartyl protein methyltransferase family.

The protein resides in the cytoplasm. The enzyme catalyses [protein]-L-isoaspartate + S-adenosyl-L-methionine = [protein]-L-isoaspartate alpha-methyl ester + S-adenosyl-L-homocysteine. In terms of biological role, catalyzes the methyl esterification of L-isoaspartyl residues in peptides and proteins that result from spontaneous decomposition of normal L-aspartyl and L-asparaginyl residues. It plays a role in the repair and/or degradation of damaged proteins. The sequence is that of Protein-L-isoaspartate O-methyltransferase from Shewanella loihica (strain ATCC BAA-1088 / PV-4).